We begin with the raw amino-acid sequence, 244 residues long: uncharacterized protein (244 aa).

This sequence belongs to the MtxX family.

This is an uncharacterized protein from Methanocaldococcus jannaschii (strain ATCC 43067 / DSM 2661 / JAL-1 / JCM 10045 / NBRC 100440) (Methanococcus jannaschii).